A 317-amino-acid chain; its full sequence is Protoheme IX farnesyltransferase (317 aa).

A run of 9 helical transmembrane segments spans residues 29 to 49 (LILL…QGRV), 53 to 73 (LLLI…TINC), 102 to 122 (VFLA…FANL), 123 to 143 (LSAC…THWL), 151 to 171 (IVIG…AVTG), 179 to 199 (VLFG…AMLI), 224 to 241 (IFLY…LVYP), 245 to 267 (VSWG…AWQL), and 283 to 303 (FSIL…LLLP).

It belongs to the UbiA prenyltransferase family. Protoheme IX farnesyltransferase subfamily.

It localises to the cell inner membrane. The catalysed reaction is heme b + (2E,6E)-farnesyl diphosphate + H2O = Fe(II)-heme o + diphosphate. Its pathway is porphyrin-containing compound metabolism; heme O biosynthesis; heme O from protoheme: step 1/1. In terms of biological role, converts heme B (protoheme IX) to heme O by substitution of the vinyl group on carbon 2 of heme B porphyrin ring with a hydroxyethyl farnesyl side group. The protein is Protoheme IX farnesyltransferase of Thermosynechococcus vestitus (strain NIES-2133 / IAM M-273 / BP-1).